The chain runs to 151 residues: Natriuretic peptides A (151 aa).

Residues 1–25 form the signal peptide; the sequence is MSSFSTTTVSFLLLLAFQLLGQTRA. Residues 62-105 form a disordered region; the sequence is VLSEPNEEAGAALSPLPEVPPWTGEVSPAQRDGGALGRGPWDSS. The propeptide occupies 93-103; that stretch reads DGGALGRGPWD. Residue Ser-129 is modified to Phosphoserine. Cys-130 and Cys-146 form a disulfide bridge. An important for degradation of atrial natriuretic peptide by IDE region spans residues 147–151; the sequence is NSFRY.

Belongs to the natriuretic peptide family. As to quaternary structure, homodimer; disulfide-linked antiparallel dimer. In terms of processing, the precursor molecule is proteolytically cleaved by CORIN at Arg-123 to produce atrial natriuretic peptide. Undergoes further proteolytic cleavage by unknown proteases to give rise to long-acting natriuretic peptide, vessel dilator and kaliuretic peptide. Additional processing gives rise to the auriculin and atriopeptin peptides. In the kidneys, alternative processing by an unknown protease results in the peptide urodilatin. Cleavage by MME initiates degradation of the factor and thereby regulates its activity. Degraded by IDE (in vitro). During IDE degradation, the resulting products can temporarily stimulate NPR2 to produce cGMP, before the fragments are completely degraded and inactivated by IDE (in vitro). Post-translationally, degraded by IDE. In terms of processing, phosphorylation on Ser-129 decreases vasorelaxant activity. In terms of tissue distribution, detected in the kidney distal tubular cells (at protein level). Present in urine (at protein level). Detected in atrial and ventricular plasma samples, and in adipocytes (at protein level). Detected in urine in one study. However, was not detected in urine in another study. In the brain, predominantly expressed in the gray matter with very weak expression in the white matter (at protein level). Localizes to astrocyte-like structures throughout the white matter, and in the cerebral vessels detected in the leptomeningeal and parenchymal vessels, and endothelium and smooth muscle layers (at protein level). Relatively low levels of expression in the kidneys compared to urodilatin (at protein level).

It localises to the secreted. The protein resides in the perikaryon. It is found in the cell projection. Its function is as follows. Hormone that plays a key role in mediating cardio-renal homeostasis, and is involved in vascular remodeling and regulating energy metabolism. Acts by specifically binding and stimulating NPR1 to produce cGMP, which in turn activates effector proteins, such as PRKG1, that drive various biological responses. Regulates vasodilation, natriuresis, diuresis and aldosterone synthesis and is therefore essential for regulating blood pressure, controlling the extracellular fluid volume and maintaining the fluid-electrolyte balance. Also involved in inhibiting cardiac remodeling and cardiac hypertrophy by inducing cardiomyocyte apoptosis and attenuating the growth of cardiomyocytes and fibroblasts. Plays a role in female pregnancy by promoting trophoblast invasion and spiral artery remodeling in uterus, and thus prevents pregnancy-induced hypertension. In adipose tissue, acts in various cGMP- and PKG-dependent pathways to regulate lipid metabolism and energy homeostasis. This includes up-regulating lipid metabolism and mitochondrial oxygen utilization by activating the AMP-activated protein kinase (AMPK), and increasing energy expenditure by acting via MAPK11 to promote the UCP1-dependent thermogenesis of brown adipose tissue. Binds the clearance receptor NPR3 which removes the hormone from circulation. May have a role in cardio-renal homeostasis through regulation of natriuresis, diuresis, vasodilation, and inhibiting aldosterone synthesis. In vitro, promotes the production of cGMP and induces vasodilation. May promote natriuresis, at least in part, by enhancing prostaglandin E2 synthesis resulting in the inhibition of renal Na+-K+-ATPase. However reports on the involvement of this peptide in mammal blood volume and blood pressure homeostasis are conflicting; according to a report, in vivo it is not sufficient to activate cGMP and does not inhibit collecting duct transport nor effect diuresis and natriuresis. Appears to bind to specific receptors that are distinct from the receptors bound by atrial natriuretic peptide and vessel dilator. Possibly enhances protein excretion in urine by decreasing proximal tubular protein reabsorption. In terms of biological role, may have a role in cardio-renal homeostasis through regulation of natriuresis, diuresis, and vasodilation. In vitro, promotes the production of cGMP and induces vasodilation. May promote natriuresis, at least in part, by enhancing prostaglandin E2 synthesis resulting in the inhibition of renal Na+-K+-ATPase. However reports on the involvement of this peptide in mammal blood volume and blood pressure homeostasis are conflicting; according to a report it is not sufficient to activate cGMP and does not inhibit collecting duct transport nor effect diuresis and natriuresis. Appears to bind to specific receptors that are distinct from the receptors bound by the atrial natriuretic and long-acting natriuretic peptides. Possibly functions in protein excretion in urine by maintaining the integrity of the proximal tubules and enhancing protein excretion by decreasing proximal tubular protein reabsorption. Functionally, may have a role in cardio-renal homeostasis through regulation of diuresis and inhibiting aldosterone synthesis. In vitro, promotes the production of cGMP and induces vasodilation. May promote natriuresis, at least in part, by enhancing prostaglandin E2 synthesis resulting in the inhibition of renal Na+-K+-ATPase. May have a role in potassium excretion but not sodium excretion (natriuresis). Possibly enhances protein excretion in urine by decreasing proximal tubular protein reabsorption. Its function is as follows. Hormone produced in the kidneys that appears to be important for maintaining cardio-renal homeostasis. Mediates vasodilation, natriuresis and diuresis primarily in the renal system, in order to maintain the extracellular fluid volume and control the fluid-electrolyte balance. Specifically binds and stimulates cGMP production by renal transmembrane receptors, likely NPR1. Urodilatin not ANP, may be the natriuretic peptide responsible for the regulation of sodium and water homeostasis in the kidney. May have a role in cardio-renal homeostasis through regulation of natriuresis and vasodilation. In vivo promotes natriuresis and in vitro, vasodilates renal artery strips. In terms of biological role, may have a role in cardio-renal homeostasis through regulation of regulation of natriuresis and vasodilation. In vivo promotes natriuresis. In vitro, vasodilates intestinal smooth muscle but not smooth muscle strips. Functionally, may have a role in cardio-renal homeostasis through regulation of natriuresis and vasodilation. In vivo promotes natriuresis. In vitro, selectively vasodilates intestinal and vascular smooth muscle strips. Its function is as follows. May have a role in cardio-renal homeostasis through regulation of natriuresis and vasodilation. In vivo promotes natriuresis. In vitro, selectively vasodilates intestinal smooth muscle but not vascular smooth muscle strips. In Homo sapiens (Human), this protein is Natriuretic peptides A (NPPA).